Reading from the N-terminus, the 608-residue chain is Auxin response factor 3 (608 aa).

Residues 1-40 (MGGLIDLNVMETEEDETQTQTPSSASGSVSPTSSSSASVS) are disordered. The span at 18 to 40 (QTQTPSSASGSVSPTSSSSASVS) shows a compositional bias: low complexity. The TF-B3 DNA-binding region spans 159 to 261 (FCKTLTASDT…KLRLGVRRAS (103 aa)).

Belongs to the ARF family. As to quaternary structure, homo and heterodimers. As to expression, expressed in the whole plant.

It localises to the nucleus. Its function is as follows. Auxin response factors (ARFs) are transcriptional factors that bind specifically to the DNA sequence 5'-TGTCTC-3' found in the auxin-responsive promoter elements (AuxREs). Could act as transcriptional activator or repressor. Formation of heterodimers with Aux/IAA proteins may alter their ability to modulate early auxin response genes expression. Involved in the establishment or elaboration of tissue patterning during gynoecial development. The polypeptide is Auxin response factor 3 (ARF3) (Arabidopsis thaliana (Mouse-ear cress)).